The sequence spans 386 residues: Adiponectin receptor protein 2 (386 aa).

The segment at 1–71 (MNEPTENRLG…HEYSDEAPQE (71 aa)) is disordered. Residues 1-147 (MNEPTENRLG…SIFRIHTETG (147 aa)) are Cytoplasmic-facing. A compositionally biased stretch (basic and acidic residues) spans 15-41 (PEPDIRLRKGHQLDGTRRGDNDSHQGD). Residues 148–168 (NIWTHLLGCVFFLCLGIFYMF) form a helical membrane-spanning segment. The Extracellular segment spans residues 169 to 181 (RPNISFVAPLQEK). A helical membrane pass occupies residues 182–202 (VVFGLFFLGAILCLSFSWLFH). His-202 contributes to the Zn(2+) binding site. At 203–213 (TVYCHSEGVSR) the chain is on the cytoplasmic side. Residues 214–234 (LFSKLDYSGIALLIMGSFVPW) form a helical membrane-spanning segment. The Extracellular portion of the chain corresponds to 235-245 (LYYSFYCNPQP). A helical transmembrane segment spans residues 246–266 (CFIYLIVICVLGIAAIIVSQW). The Cytoplasmic segment spans residues 267 to 273 (DMFATPQ). The helical transmembrane segment at 274 to 294 (YRGVRAGVFLGLGLSGIIPTL) threads the bilayer. Topologically, residues 295–309 (HYVISEGFLKAATIG) are extracellular. A helical membrane pass occupies residues 310 to 330 (QIGWLMLMASLYITGAALYAA). At 331 to 348 (RIPERFFPGKCDIWFHSH) the chain is on the cytoplasmic side. Zn(2+) contacts are provided by His-348 and His-352. The chain crosses the membrane as a helical span at residues 349-369 (QLFHIFVVAGAFVHFHGVSNL). Residues 370 to 386 (QEFRFMIGGGCSEEDAL) are Extracellular-facing.

The protein belongs to the ADIPOR family. In terms of assembly, may form homooligomers and heterooligomers with ADIPOR1. Interacts with APPL2 (via BAR domain); ADIPOQ dissociates this interaction. In terms of tissue distribution, ubiquitous. Highly expressed in skeletal muscle, liver and placenta. Weakly expressed in brain, heart, colon, spleen, kidney, thymus, small intestine, peripheral blood leukocytes and lung.

The protein resides in the cell membrane. In terms of biological role, receptor for ADIPOQ, an essential hormone secreted by adipocytes that regulates glucose and lipid metabolism. Required for normal body fat and glucose homeostasis. ADIPOQ-binding activates a signaling cascade that leads to increased PPARA activity, and ultimately to increased fatty acid oxidation and glucose uptake. Has intermediate affinity for globular and full-length adiponectin. Required for normal revascularization after chronic ischemia caused by severing of blood vessels. This is Adiponectin receptor protein 2 from Homo sapiens (Human).